Here is a 31-residue protein sequence, read N- to C-terminus: Cytochrome b6-f complex subunit 6 (31 aa).

The helical transmembrane segment at 4-24 threads the bilayer; it reads VISYFGFLLVALAFTLVTYLG.

This sequence belongs to the PetL family. In terms of assembly, the 4 large subunits of the cytochrome b6-f complex are cytochrome b6, subunit IV (17 kDa polypeptide, PetD), cytochrome f and the Rieske protein, while the 4 small subunits are PetG, PetL, PetM and PetN. The complex functions as a dimer.

The protein resides in the plastid. It localises to the chloroplast thylakoid membrane. Component of the cytochrome b6-f complex, which mediates electron transfer between photosystem II (PSII) and photosystem I (PSI), cyclic electron flow around PSI, and state transitions. PetL is important for photoautotrophic growth as well as for electron transfer efficiency and stability of the cytochrome b6-f complex. The chain is Cytochrome b6-f complex subunit 6 from Nephroselmis olivacea (Green alga).